The chain runs to 985 residues: MDRRSMGETESGDAFLDLKKPPASKCPHRYTKEELLDIKELPHSKQRPSCLSEKYDSDGVWDPEKWHASLYPASGRSSPVESLKKELDTDRPSLVRRIVDPRERVKEDDLDVVLSPQRRSFGGGCHVTAAVSSRRSGSPLEKDSDGLRLLGGRRIGSGRIISARTFEKDHRLSDKDLRDLRDRDRERDFKDKRFRREFGDSKRVFGERRRNDSYTEEEPEWFSAGPTSQSETIELTGFDDKILEEDHKGRKRTRRRTASVKEGIVECNGGVAEEDEVEVILAQEPAADQEVPRDAVLPEQSPGDFDFNEFFNLDKVPCLASMIEDVLGEGSVSASRFSRWFSNPSRSGSRSSSLGSTPHEELERLAGLEQAILSPGQNSGNYFAPIPLEDHAENKVDILEMLQKAKVDLKPLLSSLSANKEKLKESSHSGVVLSVEEVEAGLKGLKVDQQVKNSTPFMAEHLEETLSAVTNNRQLKKDGDMTAFNKLVSTMKASGTLPSQPKVSRNLESHLMSPAEIPGQPVPKNILQELLGQPVQRPASSNLLSGLMGSLEPTTSLLGQRAPSPPLSQVFQTRAASADYLRPRIPSPIGFTPGPQQLLGDPFQGMRKPMSPITAQMSQLELQQAALEGLALPHDLAVQAANFYQPGFGKPQVDRTRDGFRNRQQRVTKSPAPVHRGNSSSPAPAASITSMLSPSFTPTSVIRKMYESKEKSKEEPASGKAALGDSKEDTQKASEENLLSSSSVPSADRDSSPTTNSKLSALQRSSCSTPLSQANRYTKEQDYRPKATGRKTPTLASPVPTTPFLRPVHQVPLVPHVPMVRPAHQLHPGLVQRMLAQGVHPQHLPSLLQTGVLPPGMDLSHLQGISGPILGQPFYPLPAASHPLLNPRPGTPLHLAMVQQQLQRSVLHPPGSGSHAAAVSVQTTPQNVPSRSGLPHMHSQLEHRPSQRSSSPVGLAKWFGSDVLQQPLPSMPAKVISVDELEYRQ.

Positions 1 to 24 (MDRRSMGETESGDAFLDLKKPPAS) are disordered. Ser-5 is subject to Phosphoserine. The short motif at 30-36 (YTKEELL) is the YXXXXLphi motif element. Residues Ser-74, Ser-78, Ser-115, Ser-120, Ser-136, and Ser-138 each carry the phosphoserine modification. An interaction with CSDE1 region spans residues 131 to 161 (VSSRRSGSPLEKDSDGLRLLGGRRIGSGRII). Positions 195-211 (RREFGDSKRVFGERRRN) match the Nuclear localization signal motif. The tract at residues 208–230 (RRRNDSYTEEEPEWFSAGPTSQS) is disordered. The tract at residues 219–240 (PEWFSAGPTSQSETIELTGFDD) is interaction with DDX6. 4 positions are modified to phosphoserine: Ser-301, Ser-345, Ser-353, and Ser-374. A Glycyl lysine isopeptide (Lys-Gly) (interchain with G-Cter in SUMO2) cross-link involves residue Lys-410. Ser-417 carries the phosphoserine modification. The Nuclear export signal signature appears at 438-447 (VEAGLKGLKV). Positions 448–490 (DQQVKNSTPFMAEHLEETLSAVTNNRQLKKDGDMTAFNKLVST) are interaction with LSM14A. Residue Lys-486 is modified to N6-acetyllysine. 3 positions are modified to phosphoserine: Ser-513, Ser-564, and Ser-587. Positions 613-638 (ITAQMSQLELQQAALEGLALPHDLAV) match the Nuclear export signal motif. Disordered regions lie at residues 664–693 (QQRV…SMLS) and 707–803 (ESKE…PTTP). Ser-693 is modified (phosphoserine). The segment at 695 to 713 (SFTPTSVIRKMYESKEKSK) is interaction with PATL1. Basic and acidic residues-rich tracts occupy residues 707-717 (ESKEKSKEEPA) and 725-735 (DSKEDTQKASE). Residues 736–746 (ENLLSSSSVPS) are compositionally biased toward low complexity. Ser-752 is modified (phosphoserine). Polar residues predominate over residues 754 to 776 (TTNSKLSALQRSSCSTPLSQANR). Ser-920 and Ser-951 each carry phosphoserine. Positions 922–953 (QTTPQNVPSRSGLPHMHSQLEHRPSQRSSSPV) are disordered. Residues 940–985 (QLEHRPSQRSSSPVGLAKWFGSDVLQQPLPSMPAKVISVDELEYRQ) form an interaction with LSM14A region.

This sequence belongs to the 4E-T/EIF4E-T family. Interacts (via YXXXXLphi motif) with EIF4E. Interacts (via YXXXXLphi motif) with EIF4E2. Interacts with DDX6. Interacts with CSDE1/UNR. Interacts with CNOT1; promoting association with the CCR4-NOT complex. Interacts with LSM14A; promoting EIF4ENIF1 localization to P-bodies. Interacts with PATL1. Interacts with importin beta only in the presence of importin alpha, suggesting a direct interaction with importin alpha. Interacts with APOBEC3G in an RNA-dependent manner. Post-translationally, phosphorylation by MAPK8/JNK1 and or MAPK9/JNK2 in response to oxidative stress promotes P-body assembly. Phosphorylated during meiotic maturation. Widely expressed.

The protein localises to the cytoplasm. It localises to the P-body. The protein resides in the nucleus. Its subcellular location is the PML body. It is found in the nucleus speckle. Functionally, EIF4E-binding protein that regulates translation and stability of mRNAs in processing bodies (P-bodies). Plays a key role in P-bodies to coordinate the storage of translationally inactive mRNAs in the cytoplasm and prevent their degradation. Acts as a binding platform for multiple RNA-binding proteins: promotes deadenylation of mRNAs via its interaction with the CCR4-NOT complex, and blocks decapping via interaction with eIF4E (EIF4E and EIF4E2), thereby protecting deadenylated and repressed mRNAs from degradation. Component of a multiprotein complex that sequesters and represses translation of proneurogenic factors during neurogenesis. Promotes miRNA-mediated translational repression. Required for the formation of P-bodies. Involved in mRNA translational repression mediated by the miRNA effector TNRC6B by protecting TNRC6B-targeted mRNAs from decapping and subsequent decay. Also acts as a nucleoplasmic shuttling protein, which mediates the nuclear import of EIF4E and DDX6 by a piggy-back mechanism. In Homo sapiens (Human), this protein is Eukaryotic translation initiation factor 4E transporter.